A 509-amino-acid polypeptide reads, in one-letter code: Cytochrome P450 monooxygenase hepC (509 aa).

Residues 5-25 form a helical membrane-spanning segment; the sequence is MIIPSFWTGTAIIGLVACAYV. Residue Cys454 coordinates heme. An N-linked (GlcNAc...) asparagine glycan is attached at Asn491.

Belongs to the cytochrome P450 family. Requires heme as cofactor.

It localises to the membrane. It participates in secondary metabolite biosynthesis. Functionally, cytochrome P450 monooxygenase; part of the gene cluster that mediates the biosynthesis of heptelidic acid (HA), a sesquiterpene lactone that acts as an inhibitor of glyceraldehyde-3-phosphatedehydrogenase (GAPDH) and a growth inhibitor of the salt-tolerant lactic acid bacteria in soy sauce brewing. In Aspergillus oryzae (strain ATCC 42149 / RIB 40) (Yellow koji mold), this protein is Cytochrome P450 monooxygenase hepC.